The primary structure comprises 971 residues: Lon protease homolog, mitochondrial (971 aa).

The transit peptide at 1 to 55 directs the protein to the mitochondrion; it reads MYRAGAVLLRGATRTRLLAAASAHQSFATFSQRNQSILMMKSMELAGNSGERRFY. One can recognise a Lon N-terminal domain in the interval 89 to 359; it reads VPMLAINRYP…IALLLIQKEK (271 aa). The tract at residues 190 to 255 is disordered; sequence TPKNETPLNG…PPSATGEKQK (66 aa). Residues 214–224 are compositionally biased toward pro residues; that stretch reads LTPPPSPPPLA. Position 512–519 (512–519) interacts with ATP; it reads GPPGVGKT. Positions 718–749 are disordered; sequence AEQQNEDEEPAEKATTAITENSEAEPITSTSS. A compositionally biased stretch (polar residues) spans 733 to 749; the sequence is TAITENSEAEPITSTSS. Residues 784-971 form the Lon proteolytic domain; the sequence is VTPPGVIMGL…YDELYEHLFQ (188 aa). Active-site residues include Ser878 and Lys921.

It belongs to the peptidase S16 family. As to quaternary structure, homohexamer or homoheptamer. Organized in a ring with a central cavity.

The protein resides in the mitochondrion matrix. It carries out the reaction Hydrolysis of proteins in presence of ATP.. Functionally, ATP-dependent serine protease that mediates the selective degradation of misfolded, unassembled or oxidatively damaged polypeptides as well as certain short-lived regulatory proteins in the mitochondrial matrix. May also have a chaperone function in the assembly of inner membrane protein complexes. Participates in the regulation of mitochondrial gene expression and in the maintenance of the integrity of the mitochondrial genome. Binds to mitochondrial DNA in a site-specific manner. Involved in the degradation of transcription factor atfs-1 in the mitochondrion. This chain is Lon protease homolog, mitochondrial, found in Caenorhabditis elegans.